The following is a 379-amino-acid chain: MGIKGLTKLLADNAPKAMKEQKFESYFGRKIAVDASMSIYQFLIVVGRTGMETLTNEAGEVTSHLQGMFNRTIRLLEAGIKPVYVFDGKPPDMKKQELAKRYSKRDDATKDLTEAVEVGDKDAIEKLSKRTVKVTRQHNEDCKRLLRLMGVPVVEAPSEAEAECAALCINDKVFAVASEDMDSLTFGAPRFLRHLMDPSSKKIPVMEFDVAKVLEELELTMDQFIDLCILCGCDYCDSIKGIGGQTALKLIRQHGSIESILENLNKDRYQIPEDWPYQEARRLFKEPNVTLDIPELKWTAPDEEGLISFLVKDNGFNEDRVTKAIEKIKSAKNKSSQGRLESFFKPTATTSAPLKRKETSDKTSKAAANKKTKAGGKKK.

Positions 1–105 (MGIKGLTKLL…QELAKRYSKR (105 aa)) are N-domain. Mg(2+) is bound at residue Asp-34. Arg-71 lines the DNA pocket. Asp-87, Glu-159, Glu-161, Asp-180, and Asp-182 together coordinate Mg(2+). The segment at 123-254 (AIEKLSKRTV…QTALKLIRQH (132 aa)) is I-domain. Glu-159 serves as a coordination point for DNA. The DNA site is built by Gly-232 and Asp-234. Asp-234 provides a ligand contact to Mg(2+). Residues 331-379 (AKNKSSQGRLESFFKPTATTSAPLKRKETSDKTSKAAANKKTKAGGKKK) are disordered. The interval 336 to 344 (SQGRLESFF) is interaction with PCNA. Residues 355–364 (KRKETSDKTS) are compositionally biased toward basic and acidic residues. Residues 368–379 (ANKKTKAGGKKK) are compositionally biased toward basic residues.

This sequence belongs to the XPG/RAD2 endonuclease family. FEN1 subfamily. In terms of assembly, interacts with PCNA. Three molecules of FEN1 bind to one PCNA trimer with each molecule binding to one PCNA monomer. PCNA stimulates the nuclease activity without altering cleavage specificity. Mg(2+) serves as cofactor. Post-translationally, phosphorylated. Phosphorylation upon DNA damage induces relocalization to the nuclear plasma.

It is found in the nucleus. Its subcellular location is the nucleolus. The protein localises to the nucleoplasm. It localises to the mitochondrion. Structure-specific nuclease with 5'-flap endonuclease and 5'-3' exonuclease activities involved in DNA replication and repair. During DNA replication, cleaves the 5'-overhanging flap structure that is generated by displacement synthesis when DNA polymerase encounters the 5'-end of a downstream Okazaki fragment. It enters the flap from the 5'-end and then tracks to cleave the flap base, leaving a nick for ligation. Also involved in the long patch base excision repair (LP-BER) pathway, by cleaving within the apurinic/apyrimidinic (AP) site-terminated flap. Acts as a genome stabilization factor that prevents flaps from equilibrating into structures that lead to duplications and deletions. Also possesses 5'-3' exonuclease activity on nicked or gapped double-stranded DNA, and exhibits RNase H activity. Also involved in replication and repair of rDNA and in repairing mitochondrial DNA. This chain is Flap endonuclease 1, found in Zea mays (Maize).